The chain runs to 428 residues: Kynureninase (428 aa).

Pyridoxal 5'-phosphate-binding positions include threonine 104, threonine 105, 132–135, aspartate 213, histidine 216, and tyrosine 238; that span reads FPSD. At lysine 239 the chain carries N6-(pyridoxal phosphate)lysine. Pyridoxal 5'-phosphate is bound by residues tryptophan 267 and threonine 295.

The protein belongs to the kynureninase family. As to quaternary structure, homodimer. The cofactor is pyridoxal 5'-phosphate.

It catalyses the reaction L-kynurenine + H2O = anthranilate + L-alanine + H(+). It carries out the reaction 3-hydroxy-L-kynurenine + H2O = 3-hydroxyanthranilate + L-alanine + H(+). It participates in amino-acid degradation; L-kynurenine degradation; L-alanine and anthranilate from L-kynurenine: step 1/1. It functions in the pathway cofactor biosynthesis; NAD(+) biosynthesis; quinolinate from L-kynurenine: step 2/3. Its function is as follows. Catalyzes the cleavage of L-kynurenine (L-Kyn) and L-3-hydroxykynurenine (L-3OHKyn) into anthranilic acid (AA) and 3-hydroxyanthranilic acid (3-OHAA), respectively. The protein is Kynureninase of Bacillus mycoides (strain KBAB4) (Bacillus weihenstephanensis).